Consider the following 78-residue polypeptide: Apolipoprotein C-I (78 aa).

The N-terminal stretch at 1–26 (MRLILCLPVLVVVLLMVLEGPAPAQG) is a signal peptide.

Belongs to the apolipoprotein C1 family.

It localises to the secreted. Functionally, inhibitor of lipoprotein binding to the low density lipoprotein (LDL) receptor, LDL receptor-related protein, and very low density lipoprotein (VLDL) receptor. Associates with high density lipoproteins (HDL) and the triacylglycerol-rich lipoproteins in the plasma and makes up about 10% of the protein of the VLDL and 2% of that of HDL. Appears to interfere directly with fatty acid uptake and is also the major plasma inhibitor of cholesteryl ester transfer protein (CETP). Binds free fatty acids and reduces their intracellular esterification. Modulates the interaction of APOE with beta-migrating VLDL and inhibits binding of beta-VLDL to the LDL receptor-related protein. In Acinonyx jubatus (Cheetah), this protein is Apolipoprotein C-I (APOC1).